A 388-amino-acid chain; its full sequence is MNLHEYQGKQLFAEYGLPVSKGIACDTPKEAVAAADEIGGDGWVVKAQVHAGGRGKAGGVKLVKSKEEIREFAEKWLGKNLVTYQTDENGQPVSKILVESLTDIDQELYLGAVVDRGSRRIVFMASTEGGVEIEKVAEETPEKILKAEIDPLVGAQPYQGRELAFKLGLEGKQIGQFTKIFLGLAKLFEECDLALVEINPLVITPAGDLHCLDAKVGVDGNALYRQKKIHEMHDPSQEDSREAEAAKWELNYVALEGNIGCMVNGAGLAMGTMDIIKLSGGQPANFLDVGGGATKERVSEAFKIILSDDAVQAVLVNIFGGIVRCDMIAEGIIGAVKEVGVKVPVVVRLEGNNAELGTKVLAESGLNIIAATSLADAAEQVVKAAGGK.

In terms of domain architecture, ATP-grasp spans 9–244 (KQLFAEYGLP…PSQEDSREAE (236 aa)). ATP contacts are provided by residues lysine 46, 53–55 (GRG), glutamate 99, threonine 102, and glutamate 107. 2 residues coordinate Mg(2+): asparagine 199 and aspartate 213. Residues asparagine 264 and 321-323 (GIV) each bind substrate.

It belongs to the succinate/malate CoA ligase beta subunit family. As to quaternary structure, heterotetramer of two alpha and two beta subunits. It depends on Mg(2+) as a cofactor.

It carries out the reaction succinate + ATP + CoA = succinyl-CoA + ADP + phosphate. The enzyme catalyses GTP + succinate + CoA = succinyl-CoA + GDP + phosphate. The protein operates within carbohydrate metabolism; tricarboxylic acid cycle; succinate from succinyl-CoA (ligase route): step 1/1. Its function is as follows. Succinyl-CoA synthetase functions in the citric acid cycle (TCA), coupling the hydrolysis of succinyl-CoA to the synthesis of either ATP or GTP and thus represents the only step of substrate-level phosphorylation in the TCA. The beta subunit provides nucleotide specificity of the enzyme and binds the substrate succinate, while the binding sites for coenzyme A and phosphate are found in the alpha subunit. The polypeptide is Succinate--CoA ligase [ADP-forming] subunit beta (Marinobacter nauticus (strain ATCC 700491 / DSM 11845 / VT8) (Marinobacter aquaeolei)).